A 320-amino-acid polypeptide reads, in one-letter code: ATP-dependent 6-phosphofructokinase (320 aa).

Residues G11, 72 to 73 (RY), and 102 to 105 (GDGS) contribute to the ATP site. Residue D103 participates in Mg(2+) binding. Substrate contacts are provided by residues 125–127 (TID), R162, 169–171 (MGR), E222, R243, and 249–252 (HMQR). D127 (proton acceptor) is an active-site residue.

It belongs to the phosphofructokinase type A (PFKA) family. ATP-dependent PFK group I subfamily. Prokaryotic clade 'B1' sub-subfamily. Homotetramer. It depends on Mg(2+) as a cofactor.

The protein localises to the cytoplasm. It catalyses the reaction beta-D-fructose 6-phosphate + ATP = beta-D-fructose 1,6-bisphosphate + ADP + H(+). The protein operates within carbohydrate degradation; glycolysis; D-glyceraldehyde 3-phosphate and glycerone phosphate from D-glucose: step 3/4. Allosterically activated by ADP and other diphosphonucleosides, and allosterically inhibited by phosphoenolpyruvate. Its function is as follows. Catalyzes the phosphorylation of D-fructose 6-phosphate to fructose 1,6-bisphosphate by ATP, the first committing step of glycolysis. This is ATP-dependent 6-phosphofructokinase from Lactiplantibacillus plantarum (strain ATCC BAA-793 / NCIMB 8826 / WCFS1) (Lactobacillus plantarum).